The primary structure comprises 701 residues: Polyribonucleotide nucleotidyltransferase (701 aa).

Residues Asp490 and Asp496 each coordinate Mg(2+). Positions 557 to 616 constitute a KH domain; it reads PKVETMTIKPEKIRDVIGPGGKKINEIIDETGVKLDIEQDGTIFIGAVDQDMINRAREII. An S1 motif domain is found at 626 to 694; the sequence is GQVYNAKVRR…DKGRVNASHR (69 aa).

The protein belongs to the polyribonucleotide nucleotidyltransferase family. It depends on Mg(2+) as a cofactor.

It is found in the cytoplasm. The enzyme catalyses RNA(n+1) + phosphate = RNA(n) + a ribonucleoside 5'-diphosphate. Functionally, involved in mRNA degradation. Catalyzes the phosphorolysis of single-stranded polyribonucleotides processively in the 3'- to 5'-direction. The polypeptide is Polyribonucleotide nucleotidyltransferase (Staphylococcus carnosus (strain TM300)).